Here is a 250-residue protein sequence, read N- to C-terminus: Bis(5'-nucleosyl)-tetraphosphatase PrpE [asymmetrical] (250 aa).

This sequence belongs to the PrpE family. The cofactor is Ni(2+).

It carries out the reaction P(1),P(4)-bis(5'-guanosyl) tetraphosphate + H2O = GMP + GTP + 2 H(+). Functionally, asymmetrically hydrolyzes Ap4p to yield AMP and ATP. The chain is Bis(5'-nucleosyl)-tetraphosphatase PrpE [asymmetrical] from Oceanobacillus iheyensis (strain DSM 14371 / CIP 107618 / JCM 11309 / KCTC 3954 / HTE831).